The sequence spans 158 residues: Endoribonuclease YbeY (158 aa).

Zn(2+)-binding residues include H119, H123, and H129.

This sequence belongs to the endoribonuclease YbeY family. The cofactor is Zn(2+).

It is found in the cytoplasm. Functionally, single strand-specific metallo-endoribonuclease involved in late-stage 70S ribosome quality control and in maturation of the 3' terminus of the 16S rRNA. This is Endoribonuclease YbeY from Shewanella woodyi (strain ATCC 51908 / MS32).